A 314-amino-acid polypeptide reads, in one-letter code: Olfactory receptor 5B3 (314 aa).

At 1–23 (MENKTEVTQFILLGLTNDSELQV) the chain is on the extracellular side. Residues Asn-3 and Asn-17 are each glycosylated (N-linked (GlcNAc...) asparagine). A helical membrane pass occupies residues 24 to 44 (PLFITFPFIYIITLVGNLGII). Residues 45–52 (VLIFWDSC) lie on the Cytoplasmic side of the membrane. The helical transmembrane segment at 53 to 73 (LHNPMYFFLSNLSLVDFCYSS) threads the bilayer. The Extracellular segment spans residues 74–97 (AVTPIVMAGFLIEDKVISYNACAA). A disulfide bond links Cys-95 and Cys-187. The helical transmembrane segment at 98–118 (QMYIFVAFATVENYLLASMAY) threads the bilayer. The Cytoplasmic portion of the chain corresponds to 119–131 (DRYAAVCKPLHYT). A helical transmembrane segment spans residues 132-152 (TTMTTTVCARLAIGSYLCGFL). Asn-153 carries an N-linked (GlcNAc...) asparagine glycan. Residues 153–194 (NASIHTGDTFSLSFCKSNEVHHFFCDIPAVMVLSCSDRHISE) lie on the Extracellular side of the membrane. The helical transmembrane segment at 195–215 (LVLIYVVSFNIFIALLVILIS) threads the bilayer. The Cytoplasmic portion of the chain corresponds to 216-235 (YTFIFITILKMHSASVYQKP). Residues 236–256 (LSTCASHFIAVGIFYGTIIFM) form a helical membrane-spanning segment. Residues 257–269 (YLQPSSSHSMDTD) lie on the Extracellular side of the membrane. A helical membrane pass occupies residues 270–290 (KMAPVFYTMVIPMLNPLVYSL). Residues 291–314 (RNKEVKSAFKKVVEKAKLSVGWSV) are Cytoplasmic-facing.

It belongs to the G-protein coupled receptor 1 family.

The protein localises to the cell membrane. In terms of biological role, odorant receptor. This Homo sapiens (Human) protein is Olfactory receptor 5B3 (OR5B3).